A 201-amino-acid polypeptide reads, in one-letter code: Holliday junction branch migration complex subunit RuvA (201 aa).

Residues 1-64 (MFAYIKGVLA…EFSHTLYGFL (64 aa)) form a domain I region. The segment at 65-143 (SYQERDIFEI…AIGHLDTSDH (79 aa)) is domain II. A flexible linker region spans residues 144–153 (IEPLTQDPKS). Residues 153-201 (SKSVQDAMLALINLGYNQTTAQKAIKQGMKELPEEIDLAQLITVALKHV) form a domain III region.

It belongs to the RuvA family. In terms of assembly, homotetramer. Forms an RuvA(8)-RuvB(12)-Holliday junction (HJ) complex. HJ DNA is sandwiched between 2 RuvA tetramers; dsDNA enters through RuvA and exits via RuvB. An RuvB hexamer assembles on each DNA strand where it exits the tetramer. Each RuvB hexamer is contacted by two RuvA subunits (via domain III) on 2 adjacent RuvB subunits; this complex drives branch migration. In the full resolvosome a probable DNA-RuvA(4)-RuvB(12)-RuvC(2) complex forms which resolves the HJ.

The protein localises to the cytoplasm. The RuvA-RuvB-RuvC complex processes Holliday junction (HJ) DNA during genetic recombination and DNA repair, while the RuvA-RuvB complex plays an important role in the rescue of blocked DNA replication forks via replication fork reversal (RFR). RuvA specifically binds to HJ cruciform DNA, conferring on it an open structure. The RuvB hexamer acts as an ATP-dependent pump, pulling dsDNA into and through the RuvAB complex. HJ branch migration allows RuvC to scan DNA until it finds its consensus sequence, where it cleaves and resolves the cruciform DNA. In Protochlamydia amoebophila (strain UWE25), this protein is Holliday junction branch migration complex subunit RuvA.